Consider the following 226-residue polypeptide: Phosphoglycolate phosphatase (226 aa).

The active-site Nucleophile is the Asp-8. The Mg(2+) site is built by Asp-8 and Asp-10. Lys-152 serves as a coordination point for substrate. Residues Asp-175 and Asp-179 each coordinate Mg(2+).

This sequence belongs to the archaeal SPP-like hydrolase family. The cofactor is Mg(2+).

It catalyses the reaction 2-phosphoglycolate + H2O = glycolate + phosphate. In terms of biological role, catalyzes the dephosphorylation of 2-phosphoglycolate. The sequence is that of Phosphoglycolate phosphatase from Natronomonas pharaonis (strain ATCC 35678 / DSM 2160 / CIP 103997 / JCM 8858 / NBRC 14720 / NCIMB 2260 / Gabara) (Halobacterium pharaonis).